The primary structure comprises 430 residues: tRNA(Ile)-lysidine synthase (430 aa).

Residue 24–29 (SGGLDS) coordinates ATP.

It belongs to the tRNA(Ile)-lysidine synthase family.

The protein resides in the cytoplasm. The catalysed reaction is cytidine(34) in tRNA(Ile2) + L-lysine + ATP = lysidine(34) in tRNA(Ile2) + AMP + diphosphate + H(+). Functionally, ligates lysine onto the cytidine present at position 34 of the AUA codon-specific tRNA(Ile) that contains the anticodon CAU, in an ATP-dependent manner. Cytidine is converted to lysidine, thus changing the amino acid specificity of the tRNA from methionine to isoleucine. This is tRNA(Ile)-lysidine synthase from Haemophilus influenzae (strain ATCC 51907 / DSM 11121 / KW20 / Rd).